The sequence spans 258 residues: F-box/SPRY domain-containing protein 1 (258 aa).

Residues 6–54 form the F-box domain; it reads TEYAPDIPDNVLELIFSYLKLQDLRNCSLVCKSWNRFLNDENNEVWRAQ. The region spanning 64–256 is the B30.2/SPRY domain; sequence FKTDLLSVVP…ISMVYLGPPL (193 aa).

The protein belongs to the FBXO45/Fsn family. In terms of assembly, component of an E3 ubiquitin ligase complex composed of hiw and Fsn.

Its subcellular location is the synapse. It functions in the pathway protein modification; protein ubiquitination. Its function is as follows. Required in the presynaptic motoneuron to down-regulate the levels of wnd and restrain synaptic terminal growth at the neuromuscular junction (NMJ). The polypeptide is F-box/SPRY domain-containing protein 1 (Aedes aegypti (Yellowfever mosquito)).